Consider the following 224-residue polypeptide: uncharacterized protein (224 aa).

Its subcellular location is the virion. This is an uncharacterized protein from Acanthamoeba polyphaga mimivirus (APMV).